A 371-amino-acid polypeptide reads, in one-letter code: 3-methyl-D-ornithine--L-lysine ligase (371 aa).

K18 is an ATP binding site. 19-20 (LQ) is a binding site for L-lysine. ATP-binding positions include D39, 57 to 58 (NI), and 80 to 81 (EN). Position 80 (E80) interacts with L-lysine. The ATP-grasp domain occupies 93–277 (EKFSCPVLFD…LIELLFRAFN (185 aa)). ADP is bound by residues K112, K139, S146, and 168–171 (EEYV). Residues 177-179 (SLE) and D233 each bind D-ornithine. Positions 235, 247, and 249 each coordinate Mg(2+). E247 is a binding site for ADP. D-ornithine-binding positions include 251–256 (RFPSQT) and E310. L-lysine contacts are provided by S254 and E310.

The protein belongs to the PylC family. It depends on Mg(2+) as a cofactor.

The enzyme catalyses (3R)-3-methyl-D-ornithine + L-lysine + ATP = (3R)-3-methyl-D-ornithyl-N(6)-L-lysine + ADP + phosphate + H(+). Its pathway is amino-acid biosynthesis; L-pyrrolysine biosynthesis. Functionally, is required for the biosynthesis of pyrrolysine. Catalyzes the ATP-dependent ligation between (3R)-3-methyl-D-ornithine and L-lysine, leading to (3R)-3-methyl-D-ornithyl-N6-L-lysine. Is also involved in the synthesis of pyrroline-carboxy-lysine (Pcl), a demethylated form of pyrrolysine that is generated by the pyrrolysine biosynthetic enzymes when the growth media is supplemented with D-ornithine. The protein is 3-methyl-D-ornithine--L-lysine ligase of Methanosarcina mazei (strain ATCC BAA-159 / DSM 3647 / Goe1 / Go1 / JCM 11833 / OCM 88) (Methanosarcina frisia).